Consider the following 703-residue polypeptide: uncharacterized protein (703 aa).

The signal sequence occupies residues 1 to 23; sequence MKQIMIFLTSFMLLAMTGQTALA. A helical membrane pass occupies residues 673-693; the sequence is MYIGVLALIMVVAAVFIWIAV.

It is found in the cell membrane. This is an uncharacterized protein from Bacillus subtilis (strain 168).